Reading from the N-terminus, the 177-residue chain is Large ribosomal subunit protein uL6 (177 aa).

It belongs to the universal ribosomal protein uL6 family. In terms of assembly, part of the 50S ribosomal subunit.

Functionally, this protein binds to the 23S rRNA, and is important in its secondary structure. It is located near the subunit interface in the base of the L7/L12 stalk, and near the tRNA binding site of the peptidyltransferase center. The sequence is that of Large ribosomal subunit protein uL6 from Methylobacillus flagellatus (strain ATCC 51484 / DSM 6875 / VKM B-1610 / KT).